A 120-amino-acid chain; its full sequence is Small ribosomal subunit protein uS13 (120 aa).

The segment at G93–K120 is disordered. A compositionally biased stretch (basic residues) spans A105 to K120.

This sequence belongs to the universal ribosomal protein uS13 family. As to quaternary structure, part of the 30S ribosomal subunit. Has been shown to cross-link to S19 forming a loose heterodimer. Forms two bridges to the 50S subunit in the 70S ribosome.

Its function is as follows. Located at the top of the head of the 30S subunit, it contacts several helices of the 16S rRNA. In the 70S ribosome it contacts the 23S rRNA (bridge B1a) and protein L5 of the 50S subunit (bridge B1b), connecting the 2 subunits; these bridges are implicated in subunit movement. Contacts the tRNA in the A and P-sites. The sequence is that of Small ribosomal subunit protein uS13 (rpsM) from Geobacillus stearothermophilus (Bacillus stearothermophilus).